A 742-amino-acid polypeptide reads, in one-letter code: MQLTHDIQPEKIEKDRLYLDMGLSDEEFQRIKQILGRHPNFTETGIFSVMWSEHCSYKTSKPLLKKFPTDGPHVLQGPGEGAGVIDIGDEQAVVFKIESHNHPSAVEPYQGAATGVGGIIRDVFSMGARPIASLNSLRFGPLTNNRTKYLFSEVVAGIAGYGNCVGVPTVGGEVQFDESYEDNPLVNAMCVGLINHKDVQKGIAAGIGNTILYAGPPTGRDGIHGATFASDDLAEDSNKDRPAVQVGDPFMEKLLIEACLEVIQSDALVGIQDMGAAGLTSSASEMASKAGTGLEMNLDLVPQREQGMTAYEMMLSESQERMLLCVQAGREQEIIDIFEKYGLKSVPVGKVIEEKVFRIKHLDEVVADIPVDSLADDAPVYNMPSKEAAYYRAFQQMDIATPAIEDYANTLKQLLQQPTIANKEWVYDQYDSMVQTNTVVTPGSDAAVVRIKGTEKALAMTTDCNSRYIYLDPETGGKIAVAEAARNIVCSGAKPLGLTDGLNFGNPTNPEIFWQMEKSVEGMSAACDALHTPVISGNVSLYNQSKGKSIYPTPIVGMVGLHESTQHITPSYFQEKEDVIYCIGEAKAEFGGSELQHLYSGKYEGKAPHIDLDVEAERQEKLLSAIKEGIISSAHDISEGGLAIALAESLFNGQGLGAEINVVGDATVELFSESQSRFLVSVNKKHANAFESHFPEAAKLGKVTDQGQLTISISDKTIIHERVEELENLWKGAIPCLLKSKA.

His-54 is an active-site residue. Residues Tyr-57 and Lys-96 each contribute to the ATP site. Glu-98 contributes to the Mg(2+) binding site. Residues 99–102 and Arg-121 contribute to the substrate site; that span reads SHNH. Residue His-100 is the Proton acceptor of the active site. Asp-122 serves as a coordination point for Mg(2+). Residue Gln-245 coordinates substrate. Residue Asp-273 participates in Mg(2+) binding. A substrate-binding site is contributed by 317–319; that stretch reads ESQ. ATP contacts are provided by Asp-500 and Gly-537. Asn-538 provides a ligand contact to Mg(2+). Ser-540 is a binding site for substrate.

It belongs to the FGAMS family. Monomer. Part of the FGAM synthase complex composed of 1 PurL, 1 PurQ and 2 PurS subunits.

The protein resides in the cytoplasm. It catalyses the reaction N(2)-formyl-N(1)-(5-phospho-beta-D-ribosyl)glycinamide + L-glutamine + ATP + H2O = 2-formamido-N(1)-(5-O-phospho-beta-D-ribosyl)acetamidine + L-glutamate + ADP + phosphate + H(+). Its pathway is purine metabolism; IMP biosynthesis via de novo pathway; 5-amino-1-(5-phospho-D-ribosyl)imidazole from N(2)-formyl-N(1)-(5-phospho-D-ribosyl)glycinamide: step 1/2. In terms of biological role, part of the phosphoribosylformylglycinamidine synthase complex involved in the purines biosynthetic pathway. Catalyzes the ATP-dependent conversion of formylglycinamide ribonucleotide (FGAR) and glutamine to yield formylglycinamidine ribonucleotide (FGAM) and glutamate. The FGAM synthase complex is composed of three subunits. PurQ produces an ammonia molecule by converting glutamine to glutamate. PurL transfers the ammonia molecule to FGAR to form FGAM in an ATP-dependent manner. PurS interacts with PurQ and PurL and is thought to assist in the transfer of the ammonia molecule from PurQ to PurL. The sequence is that of Phosphoribosylformylglycinamidine synthase subunit PurL from Oceanobacillus iheyensis (strain DSM 14371 / CIP 107618 / JCM 11309 / KCTC 3954 / HTE831).